We begin with the raw amino-acid sequence, 367 residues long: Alanine racemase (367 aa).

The active-site Proton acceptor; specific for D-alanine is Lys-40. N6-(pyridoxal phosphate)lysine is present on Lys-40. Arg-136 lines the substrate pocket. Tyr-263 functions as the Proton acceptor; specific for L-alanine in the catalytic mechanism. Met-310 contacts substrate.

This sequence belongs to the alanine racemase family. It depends on pyridoxal 5'-phosphate as a cofactor.

The enzyme catalyses L-alanine = D-alanine. The protein operates within amino-acid biosynthesis; D-alanine biosynthesis; D-alanine from L-alanine: step 1/1. In terms of biological role, catalyzes the interconversion of L-alanine and D-alanine. May also act on other amino acids. This chain is Alanine racemase (alr), found in Streptococcus suis (strain 98HAH33).